A 329-amino-acid polypeptide reads, in one-letter code: Putative glucose-6-phosphate 1-epimerase (329 aa).

A compositionally biased stretch (low complexity) spans 1-13; sequence MAAPAPAGAAASP. The disordered stretch occupies residues 1 to 20; sequence MAAPAPAGAAASPSPKPQLP. Residues Arg82, Gln100, and Arg105 each coordinate substrate. His183 is an active-site residue. A substrate-binding site is contributed by Asp228. Glu287 is a catalytic residue.

Belongs to the glucose-6-phosphate 1-epimerase family.

The catalysed reaction is alpha-D-glucose 6-phosphate = beta-D-glucose 6-phosphate. In Cenchrus ciliaris (Buffelgrass), this protein is Putative glucose-6-phosphate 1-epimerase.